Reading from the N-terminus, the 173-residue chain is uncharacterized protein (173 aa).

The disordered stretch occupies residues 80 to 107 (HSATVKRTDSSHRLKSHVVDKRPRRSLD). The segment covering 85-107 (KRTDSSHRLKSHVVDKRPRRSLD) has biased composition (basic and acidic residues).

This is an uncharacterized protein from Autographa californica nuclear polyhedrosis virus (AcMNPV).